Consider the following 216-residue polypeptide: Adenylate kinase (216 aa).

11 to 16 (GSGKGT) lines the ATP pocket. The interval 31–60 (ATGDLFRKAIECGDELGDTVKSYMERGELV) is NMP. Residues Thr32, Arg37, 58-60 (ELV), 86-89 (GFPR), and Gln93 each bind AMP. Residues 127 to 163 (GRWVCRSCQSPYQSGCAEVTKGKCSRCQGELYQRPDD) form an LID region. Arg128 lines the ATP pocket. Residues Cys131, Cys134, Cys150, and Cys153 each contribute to the Zn(2+) site. Residues Arg160 and Arg171 each contribute to the AMP site. An ATP-binding site is contributed by Ala199.

It belongs to the adenylate kinase family. Monomer.

The protein localises to the cytoplasm. It carries out the reaction AMP + ATP = 2 ADP. The protein operates within purine metabolism; AMP biosynthesis via salvage pathway; AMP from ADP: step 1/1. Functionally, catalyzes the reversible transfer of the terminal phosphate group between ATP and AMP. Plays an important role in cellular energy homeostasis and in adenine nucleotide metabolism. The protein is Adenylate kinase of Dehalococcoides mccartyi (strain ATCC BAA-2100 / JCM 16839 / KCTC 5957 / BAV1).